Reading from the N-terminus, the 760-residue chain is Amyloid beta precursor protein binding family B member 2 (760 aa).

Ser123 and Ser160 each carry phosphoserine. 2 disordered regions span residues 177–295 (QNLG…LPPG) and 324–351 (PADL…KQPW). Composition is skewed to polar residues over residues 212 to 230 (NKPQ…SSSP) and 261 to 275 (SWTT…PSSP). Residues 290–322 (PDLPPGWKRVNDIAGTYYWHIPTGTTQWERPVS) enclose the WW domain. Residues Ser334, Ser409, and Ser412 each carry the phosphoserine modification. 2 PID domains span residues 413–580 (DPEA…LQVD) and 586–738 (TELV…VTTN).

In terms of assembly, interacts (via C-terminus) with APP (via C-terminus). Interacts with APLP2 (via cytoplasmic domain). In terms of tissue distribution, expressed in the brain, retinal lens and muscle cells (at protein level).

The protein resides in the endoplasmic reticulum. It is found in the golgi apparatus. The protein localises to the early endosome. Functionally, plays a role in the maintenance of lens transparency, and may also play a role in muscle cell strength. Involved in hippocampal neurite branching and neuromuscular junction formation, as a result plays a role in spatial memory functioning. Activates transcription of APP. This chain is Amyloid beta precursor protein binding family B member 2, found in Mus musculus (Mouse).